The primary structure comprises 202 residues: ATP-dependent Clp protease proteolytic subunit (202 aa).

The active-site Nucleophile is S106. The active site involves H131.

The protein belongs to the peptidase S14 family. Fourteen ClpP subunits assemble into 2 heptameric rings which stack back to back to give a disk-like structure with a central cavity, resembling the structure of eukaryotic proteasomes.

It localises to the cytoplasm. It catalyses the reaction Hydrolysis of proteins to small peptides in the presence of ATP and magnesium. alpha-casein is the usual test substrate. In the absence of ATP, only oligopeptides shorter than five residues are hydrolyzed (such as succinyl-Leu-Tyr-|-NHMec, and Leu-Tyr-Leu-|-Tyr-Trp, in which cleavage of the -Tyr-|-Leu- and -Tyr-|-Trp bonds also occurs).. Cleaves peptides in various proteins in a process that requires ATP hydrolysis. Has a chymotrypsin-like activity. Plays a major role in the degradation of misfolded proteins. This is ATP-dependent Clp protease proteolytic subunit from Methylibium petroleiphilum (strain ATCC BAA-1232 / LMG 22953 / PM1).